A 107-amino-acid chain; its full sequence is UPF0145 protein Ent638_1382 (107 aa).

It belongs to the UPF0145 family.

This chain is UPF0145 protein Ent638_1382, found in Enterobacter sp. (strain 638).